The sequence spans 328 residues: Delta(3,5)-Delta(2,4)-dienoyl-CoA isomerase, mitochondrial (328 aa).

Residues M1–L33 constitute a mitochondrion transit peptide. Residues A116–L120 and G174 each bind substrate. K231 carries the post-translational modification N6-succinyllysine. The residue at position 268 (S268) is a Phosphoserine. The short motif at S326 to L328 is the Microbody targeting signal element. Position 327 is an N6-acetyllysine (K327).

It belongs to the enoyl-CoA hydratase/isomerase family. Homohexamer.

It is found in the mitochondrion. The protein localises to the peroxisome. The catalysed reaction is (3E,5Z)-octadienoyl-CoA = (2E,4E)-octadienoyl-CoA. It carries out the reaction (3E,5Z,8Z,11Z,14Z)-eicosapentaenoyl-CoA = (2E,4E,8Z,11Z,14Z)-eicosapentaenoyl-CoA. It functions in the pathway lipid metabolism; fatty acid beta-oxidation. Functionally, isomerization of 3-trans,5-cis-dienoyl-CoA to 2-trans,4-trans-dienoyl-CoA. In Homo sapiens (Human), this protein is Delta(3,5)-Delta(2,4)-dienoyl-CoA isomerase, mitochondrial.